The chain runs to 1383 residues: DNA-directed RNA polymerase subunit beta (1383 aa).

The protein belongs to the RNA polymerase beta chain family. The RNAP catalytic core consists of 2 alpha, 1 beta, 1 beta' and 1 omega subunit. When a sigma factor is associated with the core the holoenzyme is formed, which can initiate transcription.

The enzyme catalyses RNA(n) + a ribonucleoside 5'-triphosphate = RNA(n+1) + diphosphate. DNA-dependent RNA polymerase catalyzes the transcription of DNA into RNA using the four ribonucleoside triphosphates as substrates. This Xanthomonas euvesicatoria pv. vesicatoria (strain 85-10) (Xanthomonas campestris pv. vesicatoria) protein is DNA-directed RNA polymerase subunit beta.